The sequence spans 213 residues: Cytochrome b-c1 complex subunit Rieske, mitochondrial (213 aa).

The transit peptide at 1 to 29 (MSSLAFRTLRNGLGLKSSVRALSTTTTTL) directs the protein to the mitochondrion. The Mitochondrial matrix segment spans residues 30–47 (SNYQQPDYSSYLNNKSGQ). A helical transmembrane segment spans residues 48–77 (GSRNFTYFMVGSMGLLSAAGAKSTVEAFLS). Topologically, residues 78–213 (SFAASADVLA…FTDDETLLVG (136 aa)) are mitochondrial intermembrane. The region spanning 116–211 (RHRTADEIEE…YDFTDDETLL (96 aa)) is the Rieske domain. The [2Fe-2S] cluster site is built by C156, H158, C175, and H178. The cysteines at positions 161 and 177 are disulfide-linked.

This sequence belongs to the Rieske iron-sulfur protein family. As to quaternary structure, component of the ubiquinol-cytochrome c oxidoreductase (cytochrome b-c1 complex, complex III, CIII), a multisubunit enzyme composed of 10 subunits. The complex is composed of 3 respiratory subunits cytochrome b (COB), cytochrome c1 (CYT1) and Rieske protein (RIP1), 2 core protein subunits COR1 and QCR2, and 5 low-molecular weight protein subunits QCR6, QCR7, QCR8, QCR9 and QCR10. The complex exists as an obligatory dimer and forms supercomplexes (SCs) in the inner mitochondrial membrane with a monomer or a dimer of cytochrome c oxidase (complex IV, CIV), resulting in 2 different assemblies (supercomplexes III(2)IV and III(2)IV(2)). The cofactor is [2Fe-2S] cluster.

It localises to the mitochondrion inner membrane. The catalysed reaction is a quinol + 2 Fe(III)-[cytochrome c](out) = a quinone + 2 Fe(II)-[cytochrome c](out) + 2 H(+)(out). Component of the ubiquinol-cytochrome c oxidoreductase, a multisubunit transmembrane complex that is part of the mitochondrial electron transport chain which drives oxidative phosphorylation. The complex plays an important role in the uptake of multiple carbon sources present in different host niches. This is Cytochrome b-c1 complex subunit Rieske, mitochondrial from Candida albicans (strain SC5314 / ATCC MYA-2876) (Yeast).